The chain runs to 358 residues: Carbamoyl phosphate synthase small chain (358 aa).

CPSase stretches follow at residues 1–168 (MYNR…PALG) and 1–171 (MYNR…GRGR). L-glutamine-binding residues include Ser-46, Gly-220, and Gly-222. A Glutamine amidotransferase type-1 domain is found at 172–358 (RVVLVDLGMK…FIKNIDNNMK (187 aa)). Cys-247 serves as the catalytic Nucleophile. Met-248, Gln-251, Asn-289, Gly-291, and Tyr-292 together coordinate L-glutamine. Catalysis depends on residues His-332 and Glu-334.

It belongs to the CarA family. As to quaternary structure, composed of two chains; the small (or glutamine) chain promotes the hydrolysis of glutamine to ammonia, which is used by the large (or ammonia) chain to synthesize carbamoyl phosphate. Tetramer of heterodimers (alpha,beta)4.

It carries out the reaction hydrogencarbonate + L-glutamine + 2 ATP + H2O = carbamoyl phosphate + L-glutamate + 2 ADP + phosphate + 2 H(+). The enzyme catalyses L-glutamine + H2O = L-glutamate + NH4(+). It participates in amino-acid biosynthesis; L-arginine biosynthesis; carbamoyl phosphate from bicarbonate: step 1/1. The protein operates within pyrimidine metabolism; UMP biosynthesis via de novo pathway; (S)-dihydroorotate from bicarbonate: step 1/3. Functionally, small subunit of the glutamine-dependent carbamoyl phosphate synthetase (CPSase). CPSase catalyzes the formation of carbamoyl phosphate from the ammonia moiety of glutamine, carbonate, and phosphate donated by ATP, constituting the first step of 2 biosynthetic pathways, one leading to arginine and/or urea and the other to pyrimidine nucleotides. The small subunit (glutamine amidotransferase) binds and cleaves glutamine to supply the large subunit with the substrate ammonia. In Fusobacterium nucleatum subsp. nucleatum (strain ATCC 25586 / DSM 15643 / BCRC 10681 / CIP 101130 / JCM 8532 / KCTC 2640 / LMG 13131 / VPI 4355), this protein is Carbamoyl phosphate synthase small chain.